A 95-amino-acid polypeptide reads, in one-letter code: ESAT-6-like protein EsxA (95 aa).

It belongs to the WXG100 family. ESAT-6 subfamily. As to quaternary structure, forms a tight 1:1 complex with EsxB.

This chain is ESAT-6-like protein EsxA, found in Corynebacterium diphtheriae (strain ATCC 700971 / NCTC 13129 / Biotype gravis).